We begin with the raw amino-acid sequence, 154 residues long: 3-hydroxyacyl-[acyl-carrier-protein] dehydratase FabZ (154 aa).

Residue His-57 is part of the active site.

The protein belongs to the thioester dehydratase family. FabZ subfamily.

The protein localises to the cytoplasm. It catalyses the reaction a (3R)-hydroxyacyl-[ACP] = a (2E)-enoyl-[ACP] + H2O. In terms of biological role, involved in unsaturated fatty acids biosynthesis. Catalyzes the dehydration of short chain beta-hydroxyacyl-ACPs and long chain saturated and unsaturated beta-hydroxyacyl-ACPs. This is 3-hydroxyacyl-[acyl-carrier-protein] dehydratase FabZ from Allorhizobium ampelinum (strain ATCC BAA-846 / DSM 112012 / S4) (Agrobacterium vitis (strain S4)).